The primary structure comprises 560 residues: Oxygen-dependent choline dehydrogenase 1 (560 aa).

8–37 (DYIIIGAGSAGNVLATRLTEDPDVQVLLLE) provides a ligand contact to FAD. Histidine 475 acts as the Proton acceptor in catalysis.

It belongs to the GMC oxidoreductase family. FAD serves as cofactor.

The catalysed reaction is choline + A = betaine aldehyde + AH2. The enzyme catalyses betaine aldehyde + NAD(+) + H2O = glycine betaine + NADH + 2 H(+). The protein operates within amine and polyamine biosynthesis; betaine biosynthesis via choline pathway; betaine aldehyde from choline (cytochrome c reductase route): step 1/1. Involved in the biosynthesis of the osmoprotectant glycine betaine. Catalyzes the oxidation of choline to betaine aldehyde and betaine aldehyde to glycine betaine at the same rate. This is Oxygen-dependent choline dehydrogenase 1 from Chromohalobacter salexigens (strain ATCC BAA-138 / DSM 3043 / CIP 106854 / NCIMB 13768 / 1H11).